A 439-amino-acid polypeptide reads, in one-letter code: ATP-dependent RNA helicase RhlB (439 aa).

The short motif at 9-37 (QKFADLPLHPEVKQALAENGFEFCTPIQA) is the Q motif element. Residues 40-219 (LPVLLQSKDI…YDHMNDPVKV (180 aa)) form the Helicase ATP-binding domain. 53 to 60 (AQTGTGKT) provides a ligand contact to ATP. The DEAD box motif lies at 165–168 (DEAD). One can recognise a Helicase C-terminal domain in the interval 243–390 (KMRLLLTLIE…VSNYDRDALL (148 aa)). Positions 395 to 439 (SPVKIHRKHPAGARNLRERSGAGRTPGAHRSGGRPPRHDRTRRQP) are disordered. Positions 425–439 (SGGRPPRHDRTRRQP) are enriched in basic residues.

Belongs to the DEAD box helicase family. RhlB subfamily. In terms of assembly, component of the RNA degradosome, which is a multiprotein complex involved in RNA processing and mRNA degradation.

Its subcellular location is the cytoplasm. The catalysed reaction is ATP + H2O = ADP + phosphate + H(+). DEAD-box RNA helicase involved in RNA degradation. Has RNA-dependent ATPase activity and unwinds double-stranded RNA. In Shewanella oneidensis (strain ATCC 700550 / JCM 31522 / CIP 106686 / LMG 19005 / NCIMB 14063 / MR-1), this protein is ATP-dependent RNA helicase RhlB.